We begin with the raw amino-acid sequence, 70 residues long: SPbeta prophage-derived uncharacterized protein YorZ (70 aa).

This is SPbeta prophage-derived uncharacterized protein YorZ (yorZ) from Bacillus subtilis (strain 168).